Reading from the N-terminus, the 115-residue chain is Large ribosomal subunit protein bL19 (115 aa).

It belongs to the bacterial ribosomal protein bL19 family.

Functionally, this protein is located at the 30S-50S ribosomal subunit interface and may play a role in the structure and function of the aminoacyl-tRNA binding site. The protein is Large ribosomal subunit protein bL19 of Francisella tularensis subsp. mediasiatica (strain FSC147).